The primary structure comprises 305 residues: UDP-3-O-acyl-N-acetylglucosamine deacetylase (305 aa).

Positions 79, 238, and 242 each coordinate Zn(2+). The active-site Proton donor is histidine 265.

Belongs to the LpxC family. It depends on Zn(2+) as a cofactor.

The enzyme catalyses a UDP-3-O-[(3R)-3-hydroxyacyl]-N-acetyl-alpha-D-glucosamine + H2O = a UDP-3-O-[(3R)-3-hydroxyacyl]-alpha-D-glucosamine + acetate. It functions in the pathway glycolipid biosynthesis; lipid IV(A) biosynthesis; lipid IV(A) from (3R)-3-hydroxytetradecanoyl-[acyl-carrier-protein] and UDP-N-acetyl-alpha-D-glucosamine: step 2/6. Its function is as follows. Catalyzes the hydrolysis of UDP-3-O-myristoyl-N-acetylglucosamine to form UDP-3-O-myristoylglucosamine and acetate, the committed step in lipid A biosynthesis. The polypeptide is UDP-3-O-acyl-N-acetylglucosamine deacetylase (Klebsiella pneumoniae (strain 342)).